Reading from the N-terminus, the 103-residue chain is Large ribosomal subunit protein bL21 (103 aa).

The segment covering 83-92 has biased composition (basic residues); sequence YRRKKGHRQP. Residues 83 to 103 form a disordered region; that stretch reads YRRKKGHRQPFSRVTVEKIEA.

Belongs to the bacterial ribosomal protein bL21 family. Part of the 50S ribosomal subunit. Contacts protein L20.

This protein binds to 23S rRNA in the presence of protein L20. The sequence is that of Large ribosomal subunit protein bL21 from Pelotomaculum thermopropionicum (strain DSM 13744 / JCM 10971 / SI).